The primary structure comprises 587 residues: Tyrosine-protein kinase transforming protein Src (587 aa).

The tract at residues Met1–Pro58 is disordered. Gly2 carries the N-myristoyl glycine; by host lipid modification. Residues Lys7 to His25 are compositionally biased toward basic and acidic residues. The SH3 domain occupies Gly81–Ser142. Residues Trp148 to Cys245 enclose the SH2 domain. The Protein kinase domain maps to Leu267–Phe520. Residues Leu273–Val281 and Lys295 contribute to the ATP site. Residue Asp386 is the Proton acceptor of the active site. Tyr416 carries the post-translational modification Phosphotyrosine; by autocatalysis.

Belongs to the protein kinase superfamily. Tyr protein kinase family. SRC subfamily. In terms of processing, the phosphorylated form is termed pp60v-src.

It carries out the reaction L-tyrosyl-[protein] + ATP = O-phospho-L-tyrosyl-[protein] + ADP + H(+). This phosphoprotein, required for both the initiation and the maintenance of neoplastic transformation, is a protein kinase that catalyzes the phosphorylation of tyrosine residues in vitro. This is Tyrosine-protein kinase transforming protein Src (V-SRC) from Galliformes.